The following is a 221-amino-acid chain: Large ribosomal subunit protein uL3 (221 aa).

The tract at residues 131–165 is disordered; the sequence is HNQSRGPETHGSRHHRRPGSMGPIKGKIKGKKLPG.

It belongs to the universal ribosomal protein uL3 family. As to quaternary structure, part of the 50S ribosomal subunit. Forms a cluster with proteins L14 and L19.

One of the primary rRNA binding proteins, it binds directly near the 3'-end of the 23S rRNA, where it nucleates assembly of the 50S subunit. This chain is Large ribosomal subunit protein uL3, found in Phytoplasma australiense.